The following is a 93-amino-acid chain: Small ribosomal subunit protein bS20 (93 aa).

Positions 72 to 93 (KNTASRKKSRLTRKFNSVYKAS) are disordered. Basic residues predominate over residues 74–84 (TASRKKSRLTR).

The protein belongs to the bacterial ribosomal protein bS20 family.

Its function is as follows. Binds directly to 16S ribosomal RNA. This chain is Small ribosomal subunit protein bS20, found in Carboxydothermus hydrogenoformans (strain ATCC BAA-161 / DSM 6008 / Z-2901).